The chain runs to 129 residues: RutC family protein PM1466 (129 aa).

The protein belongs to the RutC family.

The chain is RutC family protein PM1466 from Pasteurella multocida (strain Pm70).